The following is a 257-amino-acid chain: Protein LigF (257 aa).

Residues 1–82 (MTLKLYSFGP…YLEDVFPESG (82 aa)) form the GST N-terminal domain. Residues 89–257 (DPFKRAEMRV…LLKRQNEKVA (169 aa)) enclose the GST C-terminal domain.

The protein belongs to the GST superfamily.

In terms of biological role, lignin degradation enzyme. In Sphingobium sp. (strain NBRC 103272 / SYK-6), this protein is Protein LigF (ligF).